A 1191-amino-acid polypeptide reads, in one-letter code: Major DNA-binding protein (1191 aa).

Residues 288-307 are disordered; sequence ETTKGQSKMGKREGSDVSGG. A zinc finger spans residues 498-511; sequence CELCDKTSRIYCAH. The Required for filament formation signature appears at 841–842; that stretch reads FW. Positions 1166–1191 are required for nuclear localization; sequence KRPNMNVFDLEPIPEKRVPVLSVDML.

The protein belongs to the herpesviridae major DNA-binding protein family. Homooligomers. Forms double-helical filaments necessary for the formation of replication compartments within the host nucleus. Interacts with the origin-binding protein. Interacts with the helicase primase complex; this interaction stimulates primer synthesis activity of the helicase-primase complex. Interacts with the DNA polymerase. Interacts with the alkaline exonuclease; this interaction increases its nuclease processivity.

It localises to the host nucleus. In terms of biological role, plays several crucial roles in viral infection. Participates in the opening of the viral DNA origin to initiate replication by interacting with the origin-binding protein. May disrupt loops, hairpins and other secondary structures present on ssDNA to reduce and eliminate pausing of viral DNA polymerase at specific sites during elongation. Promotes viral DNA recombination by performing strand-transfer, characterized by the ability to transfer a DNA strand from a linear duplex to a complementary single-stranded DNA circle. Can also catalyze the renaturation of complementary single strands. Additionally, reorganizes the host cell nucleus, leading to the formation of prereplicative sites and replication compartments. This process is driven by the protein which can form double-helical filaments in the absence of DNA. This is Major DNA-binding protein from Gallid herpesvirus 2 (strain Chicken/Md5/ATCC VR-987) (GaHV-2).